Consider the following 318-residue polypeptide: Protein IMPACT-A (318 aa).

Residues 14–116 form the RWD domain; the sequence is DEVEALTSIY…EKIREFLLGK (103 aa). A disordered region spans residues 296–318; that stretch reads EESSKQTAKSKKVGKECKKKADH. The segment covering 308–318 has biased composition (basic and acidic residues); that stretch reads VGKECKKKADH.

Belongs to the IMPACT family. Interacts with GCN1; prevents the interaction of GCN1 with EIF2AK4/GCN2 and inhibits EIF2AK4/GCN2 kinase activity. Interaction with RPL39; this interaction occurs in a GCN1-independent manner. Associates with ribosomes; this interaction occurs in a GCN1-independent manner. Associates with actin; this interaction occurs in a GCN1-independent manner.

The protein localises to the cytoplasm. In terms of biological role, translational regulator that ensures constant high levels of translation upon a variety of stress conditions, such as amino acid starvation, UV-C irradiation, proteasome inhibitor treatment and glucose deprivation. Plays a role as a negative regulator of the EIF2AK4/GCN2 kinase activity; impairs GCN1-mediated EIF2AK4/GCN2 activation, and hence EIF2AK4/GCN2-mediated eIF-2-alpha phosphorylation and subsequent down-regulation of protein synthesis. Plays a role in differentiation of neuronal cells by stimulating neurite outgrowth. The chain is Protein IMPACT-A (impact-A) from Xenopus tropicalis (Western clawed frog).